The chain runs to 258 residues: MGISGKLGDIASKVYEDVLMEEVKKYPRPRHVGIITDGNRRYARIVGIPENEGHVKGKNKVEEVLDWCMELDIKIVTFYAFSTENFKRSPEEVDFLFHLINDAFISLLKDERVYKNKINVKVIGNVSMLPEYLRETIKITEETTKNFSNYHMNLAIGYGGREEILDAIKRIARDAIAGKINVDEIDESKFRNYLYDGNLPDPDLILRTSGEERISNFLLWQSAYSELYFSDVYWPEFSKLDFLRAIYSYQRRQRRFGR.

Residue Asp37 is part of the active site. Asp37 contacts Mg(2+). Residues 38–41 (GNRR), His54, and 82–84 (STE) contribute to the substrate site. The active-site Proton acceptor is the Asn85. Substrate contacts are provided by residues Phe86, Arg88, Arg207, and 213–215 (RIS). Glu226 contacts Mg(2+).

The protein belongs to the UPP synthase family. In terms of assembly, homodimer. Mg(2+) serves as cofactor.

It carries out the reaction geranylgeranyl diphosphate + 7 isopentenyl diphosphate = tri-trans,hepta-cis-undecaprenyl diphosphate + 7 diphosphate. Catalyzes the sequential condensation of isopentenyl diphosphate (IPP) with geranylgeranyl diphosphate (GGPP) to yield (2Z,6Z,10Z,14Z,18Z,22Z,26Z,30E,34E,38E)-undecaprenyl diphosphate (tritrans,heptacis-UPP). It is probably the precursor of glycosyl carrier lipids. In Thermoplasma volcanium (strain ATCC 51530 / DSM 4299 / JCM 9571 / NBRC 15438 / GSS1), this protein is Tritrans,polycis-undecaprenyl-diphosphate synthase (geranylgeranyl-diphosphate specific).